Here is a 189-residue protein sequence, read N- to C-terminus: Class A basic helix-loop-helix protein 15 (189 aa).

A compositionally biased stretch (basic residues) spans 1-12 (MKTKNRPPRRRA). 2 disordered regions span residues 1–85 (MKTK…ERER) and 167–189 (TEAQ…REGT). T25 is subject to Phosphothreonine. The span at 68–85 (GRRDSSIQRRLESNERER) shows a compositional bias: basic and acidic residues. In terms of domain architecture, bHLH spans 75–127 (QRRLESNERERQRMHKLNNAFQALREVIPHVRADKKLSKIETLTLAKNYIKSL).

In terms of assembly, forms homodimers or heterodimers with TCF3 gene products E12 and E47. These dimers bind to the E-box site, however, heterodimer with MYOD1 does not bind target DNA. As to expression, expressed in brain, liver, spleen and skeletal muscle.

It is found in the nucleus. Its function is as follows. Plays a role in controlling the transcriptional activity of MYOD1, ensuring that expanding myoblast populations remain undifferentiated. Repression may occur through muscle-specific E-box occupancy by homodimers. May also negatively regulate bHLH-mediated transcription through an N-terminal repressor domain. Serves as a key regulator of acinar cell function, stability, and identity. Also required for normal organelle localization in exocrine cells and for mitochondrial calcium ion transport. May function as a unique regulator of gene expression in several different embryonic and postnatal cell lineages. Binds to the E-box consensus sequence 5'-CANNTG-3'. In Homo sapiens (Human), this protein is Class A basic helix-loop-helix protein 15 (BHLHA15).